A 151-amino-acid polypeptide reads, in one-letter code: Regulatory protein RecX (151 aa).

This sequence belongs to the RecX family.

Its subcellular location is the cytoplasm. Its function is as follows. Modulates RecA activity. The protein is Regulatory protein RecX of Chlorobium phaeobacteroides (strain BS1).